Here is a 1174-residue protein sequence, read N- to C-terminus: Probable DNA-directed RNA polymerase I subunit RPA2 (1174 aa).

The segment covering 1–16 has biased composition (basic and acidic residues); it reads MSFQTLERERTFKNPP. A disordered region spans residues 1–23; sequence MSFQTLERERTFKNPPKDGTSFP. The segment at 1089 to 1118 adopts a C4-type zinc-finger fold; sequence CRDCGSIISIMSTISMNGVGSASEVRCRSC.

Belongs to the RNA polymerase beta chain family. As to quaternary structure, component of the RNA polymerase I (Pol I) complex consisting of 14 subunits.

It localises to the nucleus. The protein resides in the nucleolus. The catalysed reaction is RNA(n) + a ribonucleoside 5'-triphosphate = RNA(n+1) + diphosphate. Functionally, DNA-dependent RNA polymerase catalyzes the transcription of DNA into RNA using the four ribonucleoside triphosphates as substrates. Second largest core component of RNA polymerase I which synthesizes ribosomal RNA precursors. Proposed to contribute to the polymerase catalytic activity and forms the polymerase active center together with the largest subunit. Pol I is composed of mobile elements and RPA2 is part of the core element with the central large cleft and probably a clamp element that moves to open and close the cleft. In Schizosaccharomyces pombe (strain 972 / ATCC 24843) (Fission yeast), this protein is Probable DNA-directed RNA polymerase I subunit RPA2 (rpa2).